Consider the following 262-residue polypeptide: Global transcriptional regulator CodY (262 aa).

Positions 1-159 (MATLLEKTRK…ATTVIGVQLS (159 aa)) are GAF domain. The H-T-H motif DNA-binding region spans 207-226 (ASVIADKIGITRSVIVNALR).

The protein belongs to the CodY family.

Its subcellular location is the cytoplasm. In terms of biological role, DNA-binding global transcriptional regulator which is involved in the adaptive response to starvation and acts by directly or indirectly controlling the expression of numerous genes in response to nutrient availability. During rapid exponential growth, CodY is highly active and represses genes whose products allow adaptation to nutrient depletion. The polypeptide is Global transcriptional regulator CodY (Lactococcus lactis subsp. lactis (strain IL1403) (Streptococcus lactis)).